The chain runs to 914 residues: Solute carrier family 12 member 9 (914 aa).

Topologically, residues 1-36 are cytoplasmic; it reads MASESSPLLAYRLLGEEGAAFPPNGAGVSGVPSSRK. Ser6 carries the post-translational modification Phosphoserine. A helical transmembrane segment spans residues 37–57; the sequence is LSTFLGVVVPTVLSMFSIVVF. The Extracellular segment spans residues 58 to 72; it reads LRIGFVVGHAGLLQA. A helical membrane pass occupies residues 73–93; sequence LAMLLVAYIILALTVLSVCAI. Over 94 to 119 the chain is Cytoplasmic; sequence ATNGAVRGGGAYFMISRTLGPEVGGS. Residues 120 to 140 form a helical membrane-spanning segment; sequence IGLMFYLANVCGCAVSLLGLV. Residues 141-167 lie on the Extracellular side of the membrane; it reads ESILDVFGADATGSSGIQVLPQGYGWN. A helical transmembrane segment spans residues 168–188; sequence LLYGSLLLGLVGGVCTLGAGL. Residues 189–193 lie on the Cytoplasmic side of the membrane; that stretch reads YARAS. A helical membrane pass occupies residues 194–214; sequence FLTFLLVSGSLASVLVSFVAV. Over 215-262 the chain is Extracellular; that stretch reads GPRNIPLAPRPGTNASSVPHRHGHFTGFNGSTLRDNLGAGYAEDYTTG. Asn228 and Asn243 each carry an N-linked (GlcNAc...) asparagine glycan. The chain crosses the membrane as a helical span at residues 263-283; that stretch reads AMMTFASVFAVLFNGCTGIMA. The Cytoplasmic segment spans residues 284 to 297; it reads GANMSGELKDPSRA. Residues 298-318 traverse the membrane as a helical segment; the sequence is IPLGTIIAVAYTFFIYILLFF. At 319-338 the chain is on the extracellular side; the sequence is LSSFTCDRALLQEDYGFFRD. The chain crosses the membrane as a helical span at residues 339 to 359; it reads ISLWPPLVLIGIYATALSASM. Residues 360–376 lie on the Cytoplasmic side of the membrane; that stretch reads SSLIGASRILHALAQDD. Residues 377–399 traverse the membrane as a helical segment; that stretch reads LFGVILAPAKVVSGGGNPWGAVL. The Extracellular segment spans residues 400-416; sequence YSWGLVQLVLLAGKLNT. The helical transmembrane segment at 417 to 437 threads the bilayer; the sequence is LAAVVTVFYLVAYAAVDLSCL. At 438 to 466 the chain is on the cytoplasmic side; the sequence is SLEWASAPNFRPTFSLFSWHTCLLGVASC. Residues 467-487 form a helical membrane-spanning segment; the sequence is LLMMFLISPGAAGGSLLLMGL. The Extracellular portion of the chain corresponds to 488-740; that stretch reads LSALLTARGG…LLRPRGGPGY (253 aa). Positions 645 to 678 are disordered; that stretch reads PAFSEPAEGTREGGSPALSTLFPPPRAPGSPRAL. Residues 741-761 traverse the membrane as a helical segment; the sequence is VDVCGLFLLQMATILSMVPAW. Over 762–914 the chain is Cytoplasmic; it reads HSARLRIFLC…GVTPVTCTDL (153 aa). Residues 844-864 are disordered; that stretch reads QGRGTVGGPGGPEGRDGEEGP.

Belongs to the SLC12A transporter family. Interacts with SLC12A1.

The protein resides in the cell membrane. Its subcellular location is the lysosome membrane. Its function is as follows. May be an inhibitor of SLC12A1. Seems to correspond to a subunit of a multimeric transport system and thus, additional subunits may be required for its function. May play a role in lysosomal ion flux and osmoregulation. The polypeptide is Solute carrier family 12 member 9 (Slc12a9) (Mus musculus (Mouse)).